The sequence spans 684 residues: Poly(A) RNA polymerase cid14 (684 aa).

Disordered stretches follow at residues 1–52, 64–127, and 161–219; these read MGKK…DAYD, DQEE…KRGE, and WNSD…QAYE. Basic and acidic residues-rich tracts occupy residues 19 to 35, 73 to 91, 108 to 127, 171 to 186, and 199 to 210; these read ERTE…DKPS, GSKK…DKGG, DPLE…KRGE, SNDK…KSSK, and FFHEANEKSDSN. The Mg(2+) site is built by aspartate 298 and aspartate 300. ATP contacts are provided by glycine 364, lysine 389, serine 407, tyrosine 408, asparagine 492, and lysine 496. In terms of domain architecture, PAP-associated spans 434–492; the sequence is NFGVLLLEFLELYGKQFYYDAVGIAVHNGGFYFSKKKMGWLKPNQPYLLSIQDPVDFQN. Positions 623–684 are disordered; sequence GHENFQKQAL…SRAKKIRKRF (62 aa). Polar residues predominate over residues 628–655; the sequence is QKQALTSTGEQSSSNSRANPSKLFNISS. Residues 656-672 show a composition bias toward acidic residues; that stretch reads DDSEDEVPIIEDTTASD.

This sequence belongs to the DNA polymerase type-B-like family. In terms of assembly, heterooligomer. Component of the TRAMP complex composed of at least cid14, mtr4, and air1. It depends on Mg(2+) as a cofactor. The cofactor is Mn(2+).

It localises to the nucleus. The protein resides in the nucleolus. It carries out the reaction RNA(n) + ATP = RNA(n)-3'-adenine ribonucleotide + diphosphate. Functionally, required for 3' polyadenylation of the 5.8S and 25S rRNAs as a prelude to their degradation in the exosome. Involved in the nucleolar organization to ensure faithful chromosome segregation during mitosis. The sequence is that of Poly(A) RNA polymerase cid14 (cid14) from Schizosaccharomyces pombe (strain 972 / ATCC 24843) (Fission yeast).